Consider the following 83-residue polypeptide: Cytochrome b559 subunit alpha (83 aa).

The chain crosses the membrane as a helical span at residues 21 to 35 (VIHSITIPSLFIAGW). His23 is a binding site for heme.

The protein belongs to the PsbE/PsbF family. Heterodimer of an alpha subunit and a beta subunit. PSII is composed of 1 copy each of membrane proteins PsbA, PsbB, PsbC, PsbD, PsbE, PsbF, PsbH, PsbI, PsbJ, PsbK, PsbL, PsbM, PsbT, PsbX, PsbY, PsbZ, Psb30/Ycf12, at least 3 peripheral proteins of the oxygen-evolving complex and a large number of cofactors. It forms dimeric complexes. Requires heme b as cofactor.

It is found in the plastid. The protein resides in the chloroplast thylakoid membrane. Its function is as follows. This b-type cytochrome is tightly associated with the reaction center of photosystem II (PSII). PSII is a light-driven water:plastoquinone oxidoreductase that uses light energy to abstract electrons from H(2)O, generating O(2) and a proton gradient subsequently used for ATP formation. It consists of a core antenna complex that captures photons, and an electron transfer chain that converts photonic excitation into a charge separation. This is Cytochrome b559 subunit alpha from Helianthus annuus (Common sunflower).